Here is a 281-residue protein sequence, read N- to C-terminus: MAQKIIRVGDIEIANDKPMVLFGGMNVLESRDMAMQVCEEYVKVTEKLGIPYVFKASFDKANRSSVTSYRGPGLEEGMRIFQDIKQAFGVPIITDVHEPEQAAVVAEVCDIIQLPAFLSRQTDLVVAMAKTGAVINIKKAQFLAPQEMKHILNKCVEAGNDQLILCERGSSFGYNNLVVDMLGFGIMKQFEYPVFFDVTHALQMPGGRADSAGGRRAQVLDLAKAGISQSLAGLFLEAHPDPDNAKCDGPCALRLDKLEPFLAQLKQLDELVKSFPTVETA.

This sequence belongs to the KdsA family.

It localises to the cytoplasm. The enzyme catalyses D-arabinose 5-phosphate + phosphoenolpyruvate + H2O = 3-deoxy-alpha-D-manno-2-octulosonate-8-phosphate + phosphate. Its pathway is carbohydrate biosynthesis; 3-deoxy-D-manno-octulosonate biosynthesis; 3-deoxy-D-manno-octulosonate from D-ribulose 5-phosphate: step 2/3. It participates in bacterial outer membrane biogenesis; lipopolysaccharide biosynthesis. The chain is 2-dehydro-3-deoxyphosphooctonate aldolase from Pseudomonas fluorescens (strain SBW25).